A 378-amino-acid chain; its full sequence is Protein RecA (378 aa).

The disordered stretch occupies residues 1-20 (MAAKKDKSVPDSKITDKEGK). ATP is bound at residue 80-87 (GAESSGKT). The tract at residues 344-378 (GPVDKKKKKSKKEASSDDTDDENLEIDDAIDENND) is disordered. The segment covering 359 to 378 (SDDTDDENLEIDDAIDENND) has biased composition (acidic residues).

The protein belongs to the RecA family.

It localises to the cytoplasm. Its function is as follows. Can catalyze the hydrolysis of ATP in the presence of single-stranded DNA, the ATP-dependent uptake of single-stranded DNA by duplex DNA, and the ATP-dependent hybridization of homologous single-stranded DNAs. It interacts with LexA causing its activation and leading to its autocatalytic cleavage. This Fusobacterium nucleatum subsp. nucleatum (strain ATCC 25586 / DSM 15643 / BCRC 10681 / CIP 101130 / JCM 8532 / KCTC 2640 / LMG 13131 / VPI 4355) protein is Protein RecA.